A 292-amino-acid chain; its full sequence is Short chain dehydrogenases/reductase notP' (292 aa).

Residues 1 to 25 (MPQTSDGNVHAPQYREAKPSQGDPS) are disordered. NADP(+) is bound by residues Leu-48, Asp-97, Lys-158, Tyr-193, Lys-197, Ile-230, and Thr-232. Tyr-193 functions as the Proton donor in the catalytic mechanism. The Lowers pKa of active site Tyr role is filled by Lys-197.

The protein belongs to the short-chain dehydrogenases/reductases (SDR) family.

In terms of biological role, short chain dehydrogenases/reductase; part of the gene cluster that mediates the biosynthesis of notoamide, a fungal indole alkaloid that belongs to a family of natural products containing a characteristic bicyclo[2.2.2]diazaoctane core. The first step of notoamide biosynthesis involves coupling of L-proline and L-tryptophan by the bimodular NRPS notE', to produce cyclo-L-tryptophan-L-proline called brevianamide F. The reverse prenyltransferase notF' then acts as a deoxybrevianamide E synthase and converts brevianamide F to deoxybrevianamide E via reverse prenylation at C-2 of the indole ring leading to the bicyclo[2.2.2]diazaoctane core. Deoxybrevianamide E is further hydroxylated at C-6 of the indole ring, likely catalyzed by the cytochrome P450 monooxygenase notG', to yield 6-hydroxy-deoxybrevianamide E. 6-hydroxy-deoxybrevianamide E is a specific substrate of the prenyltransferase notC' for normal prenylation at C-7 to produce 6-hydroxy-7-prenyl-deoxybrevianamide, also called notoamide S. As the proposed pivotal branching point in notoamide biosynthesis, notoamide S can be diverted to notoamide E through an oxidative pyran ring closure putatively catalyzed by either notH' cytochrome P450 monooxygenase or the notD' FAD-linked oxidoreductase. This step would be followed by an indole 2,3-epoxidation-initiated pinacol-like rearrangement catalyzed by the notB' FAD-dependent monooxygenase leading to the formation of notoamide C and notoamide D. On the other hand notoamide S is converted to notoamide T by notH' (or notD'), a bifunctional oxidase that also functions as the intramolecular Diels-Alderase responsible for generation of (-)-notoamide T. To generate antipodal (+)-notoaminide T, notH (or notD) in Aspergillus strain MF297-2 is expected to catalyze a Diels-Alder reaction leading to the opposite stereochemistry. The remaining oxidoreductase notD' (or notH') likely catalyzes the oxidative pyran ring formation to yield (-)-stephacidin A. The FAD-dependent monooxygenase notI' is highly similar to notB' and is predicted to catalyze a similar conversion from (-)-stephacidin A to (+)-notoamide B via the 2,3-epoxidation of (-)-stephacidin A followed by a pinacol-type rearrangement. Finally, it remains unclear which enzyme could be responsible for the final hydroxylation steps leading to notoamide A and sclerotiamide. The function of notP' in the notoamide biosynthesis has not been determined yet. This Aspergillus versicolor protein is Short chain dehydrogenases/reductase notP'.